Here is a 268-residue protein sequence, read N- to C-terminus: L-aspartate dehydrogenase (268 aa).

NAD(+) contacts are provided by Ala-125 and Asn-191. His-221 is an active-site residue.

Belongs to the L-aspartate dehydrogenase family.

The catalysed reaction is L-aspartate + NADP(+) + H2O = oxaloacetate + NH4(+) + NADPH + H(+). The enzyme catalyses L-aspartate + NAD(+) + H2O = oxaloacetate + NH4(+) + NADH + H(+). The protein operates within cofactor biosynthesis; NAD(+) biosynthesis; iminoaspartate from L-aspartate (dehydrogenase route): step 1/1. In terms of biological role, specifically catalyzes the NAD or NADP-dependent dehydrogenation of L-aspartate to iminoaspartate. The protein is L-aspartate dehydrogenase of Ralstonia nicotianae (strain ATCC BAA-1114 / GMI1000) (Ralstonia solanacearum).